We begin with the raw amino-acid sequence, 328 residues long: Arabinose 5-phosphate isomerase KdsD (328 aa).

The 144-residue stretch at 41-184 (ACEKMFNCTG…AVALLKARGF (144 aa)) folds into the SIS domain. Residues 75–76 (GT), histidine 82, histidine 88, 114–123 (ALIPVLKRLH), and 148–150 (KVP) each bind substrate. A Zn(2+)-binding site is contributed by histidine 82. One can recognise a CBS 1 domain in the interval 210 to 268 (MHTGDEIPHVNKHATLRDALLEITRKNLGMTVICDESMKIDGIFTDGDLRRVFDMGGDM). Residue glutamate 275 participates in substrate binding. The CBS 2 domain occupies 277–328 (MTPGGIRVRPGILAVDALNLMQSRHITSVLVADGDQLLGVLHMHDLLRAGVV).

The protein belongs to the SIS family. GutQ/KpsF subfamily. In terms of assembly, homotetramer.

It catalyses the reaction D-arabinose 5-phosphate = D-ribulose 5-phosphate. Its pathway is carbohydrate biosynthesis; 3-deoxy-D-manno-octulosonate biosynthesis; 3-deoxy-D-manno-octulosonate from D-ribulose 5-phosphate: step 1/3. It participates in bacterial outer membrane biogenesis; lipopolysaccharide biosynthesis. Functionally, involved in the biosynthesis of 3-deoxy-D-manno-octulosonate (KDO), a unique 8-carbon sugar component of lipopolysaccharides (LPSs). Catalyzes the reversible aldol-ketol isomerization between D-ribulose 5-phosphate (Ru5P) and D-arabinose 5-phosphate (A5P). This chain is Arabinose 5-phosphate isomerase KdsD (kdsD), found in Salmonella typhimurium (strain LT2 / SGSC1412 / ATCC 700720).